Here is a 362-residue protein sequence, read N- to C-terminus: Dihydroorotate dehydrogenase (quinone) (362 aa).

Residues 60-64 (AGFDK) and Thr84 contribute to the FMN site. Lys64 contacts substrate. Residue 109–113 (NRMGF) coordinates substrate. FMN-binding residues include Asn137 and Asn168. Asn168 serves as a coordination point for substrate. Ser171 serves as the catalytic Nucleophile. Position 173 (Asn173) interacts with substrate. FMN is bound by residues Lys213 and Ser241. 242–243 (NT) lines the substrate pocket. FMN contacts are provided by residues Gly264, Gly293, and 314–315 (YS).

This sequence belongs to the dihydroorotate dehydrogenase family. Type 2 subfamily. Monomer. The cofactor is FMN.

The protein localises to the cell membrane. The catalysed reaction is (S)-dihydroorotate + a quinone = orotate + a quinol. It functions in the pathway pyrimidine metabolism; UMP biosynthesis via de novo pathway; orotate from (S)-dihydroorotate (quinone route): step 1/1. Catalyzes the conversion of dihydroorotate to orotate with quinone as electron acceptor. The sequence is that of Dihydroorotate dehydrogenase (quinone) from Bartonella henselae (strain ATCC 49882 / DSM 28221 / CCUG 30454 / Houston 1) (Rochalimaea henselae).